Here is a 217-residue protein sequence, read N- to C-terminus: Phosphatidylserine decarboxylase proenzyme (217 aa).

The active-site Schiff-base intermediate with substrate; via pyruvic acid is the serine 183. Serine 183 is modified (pyruvic acid (Ser); by autocatalysis).

It belongs to the phosphatidylserine decarboxylase family. PSD-A subfamily. In terms of assembly, heterodimer of a large membrane-associated beta subunit and a small pyruvoyl-containing alpha subunit. The cofactor is pyruvate. Post-translationally, is synthesized initially as an inactive proenzyme. Formation of the active enzyme involves a self-maturation process in which the active site pyruvoyl group is generated from an internal serine residue via an autocatalytic post-translational modification. Two non-identical subunits are generated from the proenzyme in this reaction, and the pyruvate is formed at the N-terminus of the alpha chain, which is derived from the carboxyl end of the proenzyme. The post-translation cleavage follows an unusual pathway, termed non-hydrolytic serinolysis, in which the side chain hydroxyl group of the serine supplies its oxygen atom to form the C-terminus of the beta chain, while the remainder of the serine residue undergoes an oxidative deamination to produce ammonia and the pyruvoyl prosthetic group on the alpha chain.

The protein localises to the cell membrane. The catalysed reaction is a 1,2-diacyl-sn-glycero-3-phospho-L-serine + H(+) = a 1,2-diacyl-sn-glycero-3-phosphoethanolamine + CO2. The protein operates within phospholipid metabolism; phosphatidylethanolamine biosynthesis; phosphatidylethanolamine from CDP-diacylglycerol: step 2/2. In terms of biological role, catalyzes the formation of phosphatidylethanolamine (PtdEtn) from phosphatidylserine (PtdSer). This is Phosphatidylserine decarboxylase proenzyme from Cupriavidus metallidurans (strain ATCC 43123 / DSM 2839 / NBRC 102507 / CH34) (Ralstonia metallidurans).